Here is a 311-residue protein sequence, read N- to C-terminus: MTLRLVFMGTPEFSVPTLRALAGAGHEITAIYTQPPRPAGRRGLELTRSPVHQAAEELDLYVRTPQSLKSEEEQQVFRELEADAAVVVAYGLLLPRAILEGTRLGAFNGHASLLPRWRGAAPIQRAIMAGDRETGMMVMKMDEGLDTGPIAMTEKIAIGPDMTAGELHDVMKLAGAGLMVAAIAALEQGELALTPQPATGVTYAKKIIKEETRVDWSRPAEEVHNHIRGLSPLPGAWCEMPAGDKAERVKLLRSTLSEGSGAPGEVIDEGLAIACGQGAVRLLELQRAGGKPVSAADFQRGSKLGRGTRLT.

A (6S)-5,6,7,8-tetrahydrofolate-binding site is contributed by 112 to 115; sequence SLLP.

Belongs to the Fmt family.

The catalysed reaction is L-methionyl-tRNA(fMet) + (6R)-10-formyltetrahydrofolate = N-formyl-L-methionyl-tRNA(fMet) + (6S)-5,6,7,8-tetrahydrofolate + H(+). Its function is as follows. Attaches a formyl group to the free amino group of methionyl-tRNA(fMet). The formyl group appears to play a dual role in the initiator identity of N-formylmethionyl-tRNA by promoting its recognition by IF2 and preventing the misappropriation of this tRNA by the elongation apparatus. The protein is Methionyl-tRNA formyltransferase of Chelativorans sp. (strain BNC1).